The sequence spans 154 residues: Isotocin-neurophysin IT 1 (154 aa).

The first 20 residues, 1-20, serve as a signal peptide directing secretion; that stretch reads MSGSMFSVFSLLYLLSVCSA. A disulfide bond links Cys21 and Cys26. Gly29 is modified (glycine amide). Cystine bridges form between Cys42-Cys86, Cys45-Cys59, Cys53-Cys76, Cys60-Cys66, Cys93-Cys105, Cys99-Cys117, and Cys106-Cys111.

It belongs to the vasopressin/oxytocin family.

Functionally, isotocin causes contraction of smooth muscles. This Catostomus commersonii (White sucker) protein is Isotocin-neurophysin IT 1.